We begin with the raw amino-acid sequence, 255 residues long: 5'-nucleotidase SurE (255 aa).

The a divalent metal cation site is built by Asp-16, Asp-17, Ser-47, and Asn-100.

This sequence belongs to the SurE nucleotidase family. A divalent metal cation serves as cofactor.

Its subcellular location is the cytoplasm. The catalysed reaction is a ribonucleoside 5'-phosphate + H2O = a ribonucleoside + phosphate. Functionally, nucleotidase that shows phosphatase activity on nucleoside 5'-monophosphates. The polypeptide is 5'-nucleotidase SurE (Vibrio vulnificus (strain CMCP6)).